The sequence spans 259 residues: Ribosomal RNA large subunit methyltransferase E (259 aa).

S-adenosyl-L-methionine is bound by residues G49, W51, D69, D88, and D112. K152 serves as the catalytic Proton acceptor. A TRAM domain is found at 199 to 257 (PIAEGDEHTVEIVDTGDEGDGIARIEGYTLFVDDAAEGDTVDVTVTDLKPNYGFAERRD).

Belongs to the class I-like SAM-binding methyltransferase superfamily. RNA methyltransferase RlmE family.

The protein resides in the cytoplasm. It carries out the reaction uridine(2552) in 23S rRNA + S-adenosyl-L-methionine = 2'-O-methyluridine(2552) in 23S rRNA + S-adenosyl-L-homocysteine + H(+). Functionally, specifically methylates the uridine in position 2552 of 23S rRNA at the 2'-O position of the ribose in the fully assembled 50S ribosomal subunit. This Halobacterium salinarum (strain ATCC 29341 / DSM 671 / R1) protein is Ribosomal RNA large subunit methyltransferase E.